We begin with the raw amino-acid sequence, 666 residues long: MEKGQLIEFRHQGERRLAVVDRPDGKKDWVVIDQQGQSHKLKPQRVEYEIPGGPYTVDDLPSFLGEVDQYLDPSSLEVAWELLIEEGESITPADLALLLFSEQSPSQCYAAHALLAEDKLYFKQKGNHYEPRPSSQIEEIKHQMRVQAQKEQEQQGFIDRVNQALAGEKVTWEGSDRLRLEALEKFILFPEQNHRQALDILQTLGKPGRTDETQNLLIELGIWQRHENLFLRRSAYPNQFPAKVSDVAHAYLTNPPPDPDQERFDLTTLKTYTIDDESTSEIDDGLSVETLADGGHRLWIHVADPTRLLSPNDELDLEARKRSTSLYLPTGMISMFPPELATGPMSLLQGQRCVALSFGVTLDEVGAVRDFTIAPSWVKPTYRLTYEDVDEMLVLKIQGEPELPLLAEAAKKRAQWRKSQGAITIKMPEAIIKVNADEEVQIYLQETSVSRQLVAEMMILAGEVAGRFCQEHGIPVPFRGQPQPELPSDEELLSLPPGPVRECAVRRCMPRSEVGITPSRHASLGLDLYSQATSPIRRYTDLITHFQMKAYLRGEPLPFSGEQVQEILYSVMPSSKEATLVERQTNRYWSLEFLRRNINEVWQGVMLRWLREDDGLGLILLEELGLELPHRFDRPISPGDRLSLKVSNADPHRDEIRFRELLANEA.

Residues 263–553 form the RNB domain; sequence RFDLTTLKTY…THFQMKAYLR (291 aa).

The protein belongs to the RNR ribonuclease family.

This is an uncharacterized protein from Synechocystis sp. (strain ATCC 27184 / PCC 6803 / Kazusa).